A 247-amino-acid polypeptide reads, in one-letter code: 5'-nucleotidase SurE (247 aa).

The a divalent metal cation site is built by Asp-8, Asp-9, Ser-39, and Asn-91.

The protein belongs to the SurE nucleotidase family. Requires a divalent metal cation as cofactor.

It localises to the cytoplasm. It catalyses the reaction a ribonucleoside 5'-phosphate + H2O = a ribonucleoside + phosphate. In terms of biological role, nucleotidase that shows phosphatase activity on nucleoside 5'-monophosphates. This chain is 5'-nucleotidase SurE, found in Nitrosomonas eutropha (strain DSM 101675 / C91 / Nm57).